A 139-amino-acid polypeptide reads, in one-letter code: Arsenate reductase (139 aa).

Catalysis depends on nucleophile residues cysteine 10, cysteine 82, and cysteine 89. 2 disulfides stabilise this stretch: cysteine 10–cysteine 82 and cysteine 82–cysteine 89.

It belongs to the low molecular weight phosphotyrosine protein phosphatase family. Thioredoxin-coupled ArsC subfamily.

It is found in the cytoplasm. The enzyme catalyses arsenate + [thioredoxin]-dithiol + H(+) = arsenite + [thioredoxin]-disulfide + H2O. In terms of biological role, catalyzes the reduction of arsenate [As(V)] to arsenite [As(III)]. The chain is Arsenate reductase from Oceanobacillus iheyensis (strain DSM 14371 / CIP 107618 / JCM 11309 / KCTC 3954 / HTE831).